We begin with the raw amino-acid sequence, 114 residues long: Large ribosomal subunit protein bL19 (114 aa).

The protein belongs to the bacterial ribosomal protein bL19 family.

Functionally, this protein is located at the 30S-50S ribosomal subunit interface and may play a role in the structure and function of the aminoacyl-tRNA binding site. In Halalkalibacterium halodurans (strain ATCC BAA-125 / DSM 18197 / FERM 7344 / JCM 9153 / C-125) (Bacillus halodurans), this protein is Large ribosomal subunit protein bL19.